The sequence spans 83 residues: uncharacterized protein (83 aa).

This is an uncharacterized protein from Schizosaccharomyces pombe (strain 972 / ATCC 24843) (Fission yeast).